A 389-amino-acid polypeptide reads, in one-letter code: Urotensin-2 receptor (389 aa).

Polar residues-rich tracts occupy residues 1 to 10 (MALTPESPSS) and 28 to 39 (PNATLNSSWASP). The segment at 1-39 (MALTPESPSSFPGLAAIGSSVPEPPGSPNATLNSSWASP) is disordered. Over 1–54 (MALTPESPSSFPGLAAIGSSVPEPPGSPNATLNSSWASPTEPSSLEDLVATGAI) the chain is Extracellular. N-linked (GlcNAc...) asparagine glycosylation is found at Asn29 and Asn33. The helical transmembrane segment at 55–77 (GTLLSAMGVVGVVGNAYTLVVTC) threads the bilayer. The Cytoplasmic portion of the chain corresponds to 78–87 (RSLRAVASMY). Residues 88-113 (IYVVNLALADLLYLLSIPFIVATYIT) traverse the membrane as a helical segment. Topologically, residues 114-124 (KEWHFGDVGCR) are extracellular. Cys123 and Cys199 are oxidised to a cystine. A helical transmembrane segment spans residues 125–146 (VLFSLDFLTMHASIFTLTVMSS). Residues 147-167 (ERYAAVLRPLDTVQRPKGYRK) are Cytoplasmic-facing. The helical transmembrane segment at 168–186 (LLALGTWLLALLLTLPVML) threads the bilayer. Over 187 to 209 (AMRLVRRGPKSLCLPAWGPRAHR) the chain is Extracellular. The chain crosses the membrane as a helical span at residues 210–232 (AYLTLLFATSIAGPGLLIGLLYA). Over 233–258 (RLARAYRRSQRASFKRARRPGARALR) the chain is Cytoplasmic. The helical transmembrane segment at 259–284 (LVLGIVLLFWACFLPFWLWQLLAQYR) threads the bilayer. The Extracellular segment spans residues 285–297 (EAPLAPRTARIVN). A helical membrane pass occupies residues 298–318 (YLTTCLTYGNSCANPFLYTLL). Over 319–389 (TRNYRDHLRG…PALESPGDPA (71 aa)) the chain is Cytoplasmic. Positions 328–366 (GRVRSPGSGGVRGPVPSLQPRARFQRGSGRSLSSCSPQP) are disordered. Polar residues predominate over residues 355–366 (SGRSLSSCSPQP).

The protein belongs to the G-protein coupled receptor 1 family.

The protein localises to the cell membrane. Functionally, high affinity receptor for urotensin-2 and urotensin-2B. The activity of this receptor is mediated by a G-protein that activate a phosphatidylinositol-calcium second messenger system. The chain is Urotensin-2 receptor (UTS2R) from Macaca mulatta (Rhesus macaque).